The following is a 117-amino-acid chain: MKWMFKEDHSLEHRCVESAKIRAKYPDRVPVIVEKVSGSQIVDIDKRKYLVPSDITVAQFMWIIRKRIQLPSEKAIFLFVDKTVPQSSLTMGQLYEKEKDEDGFLYVAYSGENTFGF.

N6-acetyllysine is present on lysine 24. 3 positions are modified to phosphoserine: serine 39, serine 87, and serine 88. Glycine 116 carries Phosphatidylethanolamine amidated glycine; alternate lipidation. Glycine 116 carries Phosphatidylserine amidated glycine; alternate lipidation. Residue phenylalanine 117 is a propeptide, removed in mature form.

It belongs to the ATG8 family. In terms of assembly, monomer. Interacts with ATG3, ATG7, ATG13 and ULK1. Interacts with TP53INP1 and TP53INP2. Interacts with TBC1D25. Directly interacts with SQSTM1 and BNIP3. Interacts with TECPR2 and PCM1. Interacts with TBC1D5. Interacts with TRIM5. Interacts with MEFV and TRIM21. Interacts with WDFY3. Interacts with UBA5; promoting recruitment of UBA5 to the endoplasmic reticulum membrane. Interacts with GOSR1. Interacts with KBTBD6 and KBTBD7; the interaction is direct. Interacts with reticulophagy regulators RETREG1, RETREG2 and RETREG3. Interacts with IRGM. Interacts with DNM2. Interacts with NCOA4. Interacts with IRGQ. In terms of processing, the precursor molecule is cleaved by ATG4 (ATG4A, ATG4B, ATG4C or ATG4D) to expose the glycine at the C-terminus and form the cytosolic form, GABARAPL2-I. The processed form is then activated by APG7L/ATG7, transferred to ATG3 and conjugated to phosphatidylethanolamine (PE) phospholipid to form the membrane-bound form, GABARAPL2-II. During non-canonical autophagy, the processed form is conjugated to phosphatidylserine (PS) phospholipid. ATG4 proteins also mediate the delipidation of PE-conjugated forms required for GABARAPL2 recycling when autophagosomes fuse with lysosomes. In addition, ATG4B and ATG4D mediate delipidation of ATG8 proteins conjugated to PS during non-canonical autophagy. ATG4B constitutes the major protein for proteolytic activation. ATG4D is the main enzyme for delipidation activity. Phosphorylation at Ser-87 and Ser-88 by TBK1 prevents interaction with ATG4 (ATG4A, ATG4B, ATG4C or ATG4D). Phosphorylation by TBK1 on autophagosomes prevents their delipidation by ATG4 and premature removal from nascent autophagosomes. In terms of tissue distribution, ubiquitous. Expressed at high levels in the brain, heart, prostate, ovary, spleen and skeletal muscle. Expressed at very low levels in lung, thymus and small intestine.

It is found in the cytoplasmic vesicle. It localises to the autophagosome. The protein localises to the endoplasmic reticulum membrane. The protein resides in the golgi apparatus. In terms of biological role, ubiquitin-like modifier involved in intra-Golgi traffic. Modulates intra-Golgi transport through coupling between NSF activity and SNAREs activation. It first stimulates the ATPase activity of NSF which in turn stimulates the association with GOSR1. Involved in autophagy. Plays a role in mitophagy which contributes to regulate mitochondrial quantity and quality by eliminating the mitochondria to a basal level to fulfill cellular energy requirements and preventing excess ROS production. Whereas LC3s are involved in elongation of the phagophore membrane, the GABARAP/GATE-16 subfamily is essential for a later stage in autophagosome maturation. This chain is Gamma-aminobutyric acid receptor-associated protein-like 2, found in Bos taurus (Bovine).